The following is a 171-amino-acid chain: UPF0763 protein HPSH_03535 (171 aa).

Belongs to the UPF0763 family.

This Helicobacter pylori (strain Shi470) protein is UPF0763 protein HPSH_03535.